The sequence spans 58 residues: Large ribosomal subunit protein uL24 (58 aa).

The protein belongs to the universal ribosomal protein uL24 family. As to quaternary structure, part of the 50S ribosomal subunit.

Functionally, one of two assembly initiator proteins, it binds directly to the 5'-end of the 23S rRNA, where it nucleates assembly of the 50S subunit. One of the proteins that surrounds the polypeptide exit tunnel on the outside of the subunit. The protein is Large ribosomal subunit protein uL24 (rplX) of Spiroplasma citri.